The chain runs to 504 residues: ATP synthase subunit alpha (504 aa).

An ATP-binding site is contributed by 169 to 176; it reads GDRQTGKT.

This sequence belongs to the ATPase alpha/beta chains family. In terms of assembly, F-type ATPases have 2 components, CF(1) - the catalytic core - and CF(0) - the membrane proton channel. CF(1) has five subunits: alpha(3), beta(3), gamma(1), delta(1), epsilon(1). CF(0) has three main subunits: a(1), b(2) and c(9-12). The alpha and beta chains form an alternating ring which encloses part of the gamma chain. CF(1) is attached to CF(0) by a central stalk formed by the gamma and epsilon chains, while a peripheral stalk is formed by the delta and b chains.

Its subcellular location is the cell membrane. It catalyses the reaction ATP + H2O + 4 H(+)(in) = ADP + phosphate + 5 H(+)(out). In terms of biological role, produces ATP from ADP in the presence of a proton gradient across the membrane. The alpha chain is a regulatory subunit. The protein is ATP synthase subunit alpha of Clostridium botulinum (strain Langeland / NCTC 10281 / Type F).